A 697-amino-acid chain; its full sequence is Portal protein (697 aa).

Residues 633–697 (MSREAAGGVP…RRAGGPYGFH (65 aa)) form a disordered region. The span at 664 to 689 (ITADEERRGPERVGRFRNGGPDDPRR) shows a compositional bias: basic and acidic residues.

It belongs to the herpesviridae portal protein family. Homododecamerizes. Interacts with terminase subunits TRM1 and TRM3.

It localises to the virion. Its subcellular location is the host nucleus. Forms a portal in the viral capsid through which viral DNA is translocated during DNA packaging. Assembles as a dodecamer at a single fivefold axe of the T=16 icosahedric capsid. Binds to the molecular motor that translocates the viral DNA, termed terminase. The sequence is that of Portal protein (UL104) from Homo sapiens (Human).